A 203-amino-acid polypeptide reads, in one-letter code: Amelogenin, Y isoform (203 aa).

The first 16 residues, 1-16 (MGTWILFACLVGAAFA), serve as a signal peptide directing secretion. Residues 116–180 (MPVPGQQSMT…PPLPPMFPMR (65 aa)) are disordered. Residues 120-130 (GQQSMTPTQHH) are compositionally biased toward polar residues. Residues 131–142 (QPNLPLPAQQPF) are compositionally biased toward low complexity. Pro residues predominate over residues 143–180 (QPQPVQPLPHQPMQPQPPVQPMQPLLPQPPLPPMFPMR).

This sequence belongs to the amelogenin family.

The protein resides in the secreted. It localises to the extracellular space. The protein localises to the extracellular matrix. In terms of biological role, plays a role in biomineralization. Seems to regulate the formation of crystallites during the secretory stage of tooth enamel development. Thought to play a major role in the structural organization and mineralization of developing enamel. In Pan troglodytes (Chimpanzee), this protein is Amelogenin, Y isoform (AMELY).